The chain runs to 216 residues: NADH-quinone oxidoreductase subunit C (216 aa).

It belongs to the complex I 30 kDa subunit family. In terms of assembly, NDH-1 is composed of 14 different subunits. Subunits NuoB, C, D, E, F, and G constitute the peripheral sector of the complex.

The protein resides in the cell inner membrane. It carries out the reaction a quinone + NADH + 5 H(+)(in) = a quinol + NAD(+) + 4 H(+)(out). In terms of biological role, NDH-1 shuttles electrons from NADH, via FMN and iron-sulfur (Fe-S) centers, to quinones in the respiratory chain. The immediate electron acceptor for the enzyme in this species is believed to be ubiquinone. Couples the redox reaction to proton translocation (for every two electrons transferred, four hydrogen ions are translocated across the cytoplasmic membrane), and thus conserves the redox energy in a proton gradient. This Francisella tularensis subsp. tularensis (strain FSC 198) protein is NADH-quinone oxidoreductase subunit C.